The chain runs to 104 residues: ATP-dependent Clp protease adapter protein ClpS (104 aa).

This sequence belongs to the ClpS family. In terms of assembly, binds to the N-terminal domain of the chaperone ClpA.

Its function is as follows. Involved in the modulation of the specificity of the ClpAP-mediated ATP-dependent protein degradation. The chain is ATP-dependent Clp protease adapter protein ClpS from Burkholderia ambifaria (strain MC40-6).